The sequence spans 510 residues: Glycogen synthase (510 aa).

Residue K18 participates in ADP-alpha-D-glucose binding.

This sequence belongs to the glycosyltransferase 1 family. Bacterial/plant glycogen synthase subfamily.

It carries out the reaction [(1-&gt;4)-alpha-D-glucosyl](n) + ADP-alpha-D-glucose = [(1-&gt;4)-alpha-D-glucosyl](n+1) + ADP + H(+). The protein operates within glycan biosynthesis; glycogen biosynthesis. Its function is as follows. Synthesizes alpha-1,4-glucan chains using ADP-glucose. The sequence is that of Glycogen synthase from Bordetella parapertussis (strain 12822 / ATCC BAA-587 / NCTC 13253).